Reading from the N-terminus, the 695-residue chain is MSRGISTFRNIGISAHIDSGKTTLSERILFYCDRIHAIHEVRGKDGVGATMDNMELERERGITIQSASTQVQWKGHTINVIDTPGHVDFTIEVERSLRVLDGAVLVLCSVAGVQSQSITVDRQLRRYHVPRISFINKCDRTGANPFKVCAQLREKLSLNAHLMQLPIGLEDRLEGVIDLISLKALYFEGESGAHVREAPIPEQYQADVKKYRDELIDAASLFSDELAEAYLEGTETDQLIRAAVRAGTIAEKFVPVFCGSAYKNKGIQPLLDAITYYLPDPTEVTNTALDLDRAEEPVTLSTDADAPVVALGFKLEDGKYGQLTYVRVYQGTIKKGAELFNVRARKKFKVGRLVRMNSNQMEDISEGTPGDIVALFGVDCASGDTFCSGDLNYAMTSMFVPEPVISLSITPKDKRSADQVSKALNRFTKEDPTFRSFVDPESNQTIIQGMGELHLDVYIERMRREYKCEVETGMPQVAYREAISARADFNYTHKKQTGGSGQFGRVAGFIEPIAGQDYEFVDQIKGGVIPNEFIPSCDKGFRTAVKKGTLIGFPIVGVRVTINDGQSHPVDSSDMAFQAAAIGAFREAYNGAKPVVLEPIMRVSVEGPQEFQGSVFGLINQRRGVVVSSADDEQFSRVDAEVPLSEMFGFSTVLRSSTQGKAEYSMEFAKYGKAPQGVTDSLIKEYQEKRKAEQR.

A tr-type G domain is found at 6–282; sequence STFRNIGISA…AITYYLPDPT (277 aa). Residues 15-22, 82-86, and 136-139 contribute to the GTP site; these read AHIDSGKT, DTPGH, and NKCD.

The protein belongs to the TRAFAC class translation factor GTPase superfamily. Classic translation factor GTPase family. EF-G/EF-2 subfamily.

Its subcellular location is the cytoplasm. In terms of biological role, catalyzes the GTP-dependent ribosomal translocation step during translation elongation. During this step, the ribosome changes from the pre-translocational (PRE) to the post-translocational (POST) state as the newly formed A-site-bound peptidyl-tRNA and P-site-bound deacylated tRNA move to the P and E sites, respectively. Catalyzes the coordinated movement of the two tRNA molecules, the mRNA and conformational changes in the ribosome. The protein is Elongation factor G 1 (fusA) of Treponema pallidum (strain Nichols).